We begin with the raw amino-acid sequence, 516 residues long: D-alanine--D-alanyl carrier protein ligase (516 aa).

ATP is bound at residue 156–157 (TS). Residue D203 coordinates D-alanine. Residue 298–303 (NAYGPT) participates in ATP binding. V307 serves as a coordination point for D-alanine. Residues D389, 401–404 (YGGR), and K503 contribute to the ATP site. K503 is a binding site for D-alanine.

This sequence belongs to the ATP-dependent AMP-binding enzyme family. DltA subfamily.

Its subcellular location is the cytoplasm. The enzyme catalyses holo-[D-alanyl-carrier protein] + D-alanine + ATP = D-alanyl-[D-alanyl-carrier protein] + AMP + diphosphate. The protein operates within cell wall biogenesis; lipoteichoic acid biosynthesis. Catalyzes the first step in the D-alanylation of lipoteichoic acid (LTA), the activation of D-alanine and its transfer onto the D-alanyl carrier protein (Dcp) DltC. In an ATP-dependent two-step reaction, forms a high energy D-alanyl-AMP intermediate, followed by transfer of the D-alanyl residue as a thiol ester to the phosphopantheinyl prosthetic group of the Dcp. D-alanylation of LTA plays an important role in modulating the properties of the cell wall in Gram-positive bacteria, influencing the net charge of the cell wall. The protein is D-alanine--D-alanyl carrier protein ligase of Streptococcus pneumoniae (strain ATCC 700669 / Spain 23F-1).